Consider the following 134-residue polypeptide: 6,7-dimethyl-8-ribityllumazine synthase (134 aa).

5-amino-6-(D-ribitylamino)uracil contacts are provided by residues Phe-11, Ala-43–Asp-45, and Ala-67–Val-69. Residue Asp-72 to Thr-73 participates in (2S)-2-hydroxy-3-oxobutyl phosphate binding. His-75 functions as the Proton donor in the catalytic mechanism. 5-amino-6-(D-ribitylamino)uracil is bound at residue Phe-100. Position 115 (Arg-115) interacts with (2S)-2-hydroxy-3-oxobutyl phosphate.

Belongs to the DMRL synthase family.

It carries out the reaction (2S)-2-hydroxy-3-oxobutyl phosphate + 5-amino-6-(D-ribitylamino)uracil = 6,7-dimethyl-8-(1-D-ribityl)lumazine + phosphate + 2 H2O + H(+). It functions in the pathway cofactor biosynthesis; riboflavin biosynthesis; riboflavin from 2-hydroxy-3-oxobutyl phosphate and 5-amino-6-(D-ribitylamino)uracil: step 1/2. Catalyzes the formation of 6,7-dimethyl-8-ribityllumazine by condensation of 5-amino-6-(D-ribitylamino)uracil with 3,4-dihydroxy-2-butanone 4-phosphate. This is the penultimate step in the biosynthesis of riboflavin. The chain is 6,7-dimethyl-8-ribityllumazine synthase from Halorubrum lacusprofundi (strain ATCC 49239 / DSM 5036 / JCM 8891 / ACAM 34).